A 167-amino-acid polypeptide reads, in one-letter code: Cofilin-2 (167 aa).

The ADF-H domain occupies 4–153 (GVTVNDEVIK…KDRCTLADKL (150 aa)). The Nuclear localization signal motif lies at 30–34 (KKRKK).

It belongs to the actin-binding proteins ADF family.

The protein localises to the nucleus matrix. The protein resides in the cytoplasm. Its subcellular location is the cytoskeleton. In terms of biological role, controls reversibly actin polymerization and depolymerization in a pH-sensitive manner. It has the ability to bind G- and F-actin in a 1:1 ratio of cofilin to actin. It is the major component of intranuclear and cytoplasmic actin rods. The sequence is that of Cofilin-2 (cfl2) from Xenopus tropicalis (Western clawed frog).